We begin with the raw amino-acid sequence, 214 residues long: Redox-sensing transcriptional repressor Rex (214 aa).

The H-T-H motif DNA-binding region spans 18-57; the sequence is LYYRLVNQLHEKGIDRVNSKTISEALDIDSASIRRDFSYF. 92–97 is a binding site for NAD(+); the sequence is GVGNLG.

Belongs to the transcriptional regulatory Rex family. Homodimer.

It localises to the cytoplasm. In terms of biological role, modulates transcription in response to changes in cellular NADH/NAD(+) redox state. The polypeptide is Redox-sensing transcriptional repressor Rex (Staphylococcus carnosus (strain TM300)).